Reading from the N-terminus, the 391-residue chain is 3-ketoacyl-CoA thiolase (391 aa).

The active-site Acyl-thioester intermediate is cysteine 95. Residues histidine 347 and cysteine 377 each act as proton acceptor in the active site.

The protein belongs to the thiolase-like superfamily. Thiolase family. As to quaternary structure, heterotetramer of two alpha chains (FadB) and two beta chains (FadA).

It is found in the cytoplasm. It catalyses the reaction an acyl-CoA + acetyl-CoA = a 3-oxoacyl-CoA + CoA. It functions in the pathway lipid metabolism; fatty acid beta-oxidation. Catalyzes the final step of fatty acid oxidation in which acetyl-CoA is released and the CoA ester of a fatty acid two carbons shorter is formed. In Pseudomonas putida (strain ATCC 47054 / DSM 6125 / CFBP 8728 / NCIMB 11950 / KT2440), this protein is 3-ketoacyl-CoA thiolase.